The following is a 199-amino-acid chain: Probable GTP-binding protein EngB (199 aa).

One can recognise an EngB-type G domain in the interval 22-196; that stretch reads NFSEVAFLGR…EDVIINQTLG (175 aa). Residues 30–37, 57–61, 82–85, 152–155, and 175–177 contribute to the GTP site; these read GRSNVGKS, GKTQL, DLPG, TKCD, and VSN. The Mg(2+) site is built by Ser37 and Thr59.

Belongs to the TRAFAC class TrmE-Era-EngA-EngB-Septin-like GTPase superfamily. EngB GTPase family. Requires Mg(2+) as cofactor.

Necessary for normal cell division and for the maintenance of normal septation. In Campylobacter jejuni subsp. doylei (strain ATCC BAA-1458 / RM4099 / 269.97), this protein is Probable GTP-binding protein EngB.